The following is a 130-amino-acid chain: Cystatin (130 aa).

The signal sequence occupies residues 1 to 19 (MEWKIVVPLFAVAFTVANA). Residues 67 to 71 (QVVSG) carry the Secondary area of contact motif. Intrachain disulfides connect Cys85–Cys94 and Cys108–Cys128.

The protein belongs to the cystatin family.

The protein localises to the secreted. Functionally, cysteine proteinase inhibitor. In Oncorhynchus mykiss (Rainbow trout), this protein is Cystatin.